The primary structure comprises 510 residues: Cytochrome P450 703A2 (510 aa).

The helical transmembrane segment at Ile-2–Leu-22 threads the bilayer. Cys-451 provides a ligand contact to heme.

Belongs to the cytochrome P450 family. The cofactor is heme.

Its subcellular location is the membrane. The enzyme catalyses dodecanoate + reduced [NADPH--hemoprotein reductase] + O2 = 7-hydroxydodecanoate + oxidized [NADPH--hemoprotein reductase] + H2O + H(+). Involved in pollen wall development. Catalyzes the conversion of medium-chain saturated fatty acids to the corresponding monohydroxylated fatty acids, with a preferential hydroxylation of lauric acid at the C-7 position. In-chain hydroxylated fatty acids, together with omega-hydroxylated fatty acids, are key monomeric aliphatic building blocks for sporopollenin synthesis during exine formation. This chain is Cytochrome P450 703A2, found in Arabidopsis thaliana (Mouse-ear cress).